A 142-amino-acid chain; its full sequence is UPF0102 protein Bamb_0202 (142 aa).

The interval 1–23 (MCHAAPAAPASGRGLPHGGGNFS) is disordered.

Belongs to the UPF0102 family.

The polypeptide is UPF0102 protein Bamb_0202 (Burkholderia ambifaria (strain ATCC BAA-244 / DSM 16087 / CCUG 44356 / LMG 19182 / AMMD) (Burkholderia cepacia (strain AMMD))).